The following is a 390-amino-acid chain: Chorismate synthase 1 (390 aa).

NADP(+)-binding residues include R39 and R45. The interval 95–117 (EQEEKEMKRKVTKPRPGHADLNG) is disordered. FMN-binding positions include 132–134 (RSS), 253–254 (NA), G298, 313–317 (KPIPT), and R339.

The protein belongs to the chorismate synthase family. As to quaternary structure, homotetramer. The cofactor is FMNH2.

It carries out the reaction 5-O-(1-carboxyvinyl)-3-phosphoshikimate = chorismate + phosphate. It participates in metabolic intermediate biosynthesis; chorismate biosynthesis; chorismate from D-erythrose 4-phosphate and phosphoenolpyruvate: step 7/7. Functionally, catalyzes the anti-1,4-elimination of the C-3 phosphate and the C-6 proR hydrogen from 5-enolpyruvylshikimate-3-phosphate (EPSP) to yield chorismate, which is the branch point compound that serves as the starting substrate for the three terminal pathways of aromatic amino acid biosynthesis. This reaction introduces a second double bond into the aromatic ring system. This Bacillus cereus (strain ZK / E33L) protein is Chorismate synthase 1.